Here is a 478-residue protein sequence, read N- to C-terminus: UDP-N-acetylmuramate--L-alanine ligase (478 aa).

125 to 131 contacts ATP; sequence GTHGKTT.

The protein belongs to the MurCDEF family.

It localises to the cytoplasm. The enzyme catalyses UDP-N-acetyl-alpha-D-muramate + L-alanine + ATP = UDP-N-acetyl-alpha-D-muramoyl-L-alanine + ADP + phosphate + H(+). Its pathway is cell wall biogenesis; peptidoglycan biosynthesis. Cell wall formation. The polypeptide is UDP-N-acetylmuramate--L-alanine ligase (Dichelobacter nodosus (strain VCS1703A)).